We begin with the raw amino-acid sequence, 390 residues long: Queuine tRNA-ribosyltransferase (390 aa).

Asp-92 serves as the catalytic Proton acceptor. Residues 92 to 96 (DSGGF), Asp-146, Gln-195, and Gly-222 each bind substrate. The tract at residues 253–259 (GVGTPED) is RNA binding. The Nucleophile role is filled by Asp-272. An RNA binding; important for wobble base 34 recognition region spans residues 277–281 (TRNAR). Cys-310, Cys-312, Cys-315, and His-354 together coordinate Zn(2+).

It belongs to the queuine tRNA-ribosyltransferase family. Homodimer. Within each dimer, one monomer is responsible for RNA recognition and catalysis, while the other monomer binds to the replacement base PreQ1. Zn(2+) is required as a cofactor.

The enzyme catalyses 7-aminomethyl-7-carbaguanine + guanosine(34) in tRNA = 7-aminomethyl-7-carbaguanosine(34) in tRNA + guanine. Its pathway is tRNA modification; tRNA-queuosine biosynthesis. In terms of biological role, catalyzes the base-exchange of a guanine (G) residue with the queuine precursor 7-aminomethyl-7-deazaguanine (PreQ1) at position 34 (anticodon wobble position) in tRNAs with GU(N) anticodons (tRNA-Asp, -Asn, -His and -Tyr). Catalysis occurs through a double-displacement mechanism. The nucleophile active site attacks the C1' of nucleotide 34 to detach the guanine base from the RNA, forming a covalent enzyme-RNA intermediate. The proton acceptor active site deprotonates the incoming PreQ1, allowing a nucleophilic attack on the C1' of the ribose to form the product. After dissociation, two additional enzymatic reactions on the tRNA convert PreQ1 to queuine (Q), resulting in the hypermodified nucleoside queuosine (7-(((4,5-cis-dihydroxy-2-cyclopenten-1-yl)amino)methyl)-7-deazaguanosine). The protein is Queuine tRNA-ribosyltransferase of Acidovorax sp. (strain JS42).